The chain runs to 357 residues: Protein-L-isoaspartate O-methyltransferase domain-containing protein 1 (357 aa).

Glycine 2 is lipidated: N-myristoyl glycine. Residue serine 64 is part of the active site. 3 adoMet binding motif regions span residues 85-94 (LNLGSGTGYL), 160-164 (YDRIY), and 181-191 (LKVGGILVMPI). Positions 240–250 (VRNLQDLARIY) are BC-box. Positions 299-333 (PLDSEEDEKMEEDNKEEEEKDHNEAMKPEEPPQNL) are disordered. Residues 301–317 (DSEEDEKMEEDNKEEEE) show a composition bias toward acidic residues. Residues 318 to 333 (KDHNEAMKPEEPPQNL) are compositionally biased toward basic and acidic residues. Residues 341-344 (LPLP) form a CUL-box region.

This sequence belongs to the methyltransferase superfamily. L-isoaspartyl/D-aspartyl protein methyltransferase family. Component of the probable ECS(PCMTD1) E3 ubiquitin-protein ligase complex, at least composed of CUL5, ELOB, ELOC, RBX2 and PCMTD1. Interacts (via the BC-box) with ELOB and ELOC; the interaction is direct and stabilizes PCMTD1.

The protein localises to the cytoplasm. Its subcellular location is the membrane. Its function is as follows. Substrate recognition component of an ECS (Elongin BC-CUL5-SOCS-box protein) E3 ubiquitin ligase complex which mediates the ubiquitination and subsequent proteasomal degradation of target proteins. Specifically binds to the methyltransferase cofactor S-adenosylmethionine (AdoMet) via the N-terminal AdoMet binding motif, but does not display methyltransferase activity. May provide an alternate maintenance pathway for modified proteins by acting as a damage-specific E3 ubiquitin ligase adaptor protein. The sequence is that of Protein-L-isoaspartate O-methyltransferase domain-containing protein 1 from Homo sapiens (Human).